A 560-amino-acid chain; its full sequence is Alpha-farnesene synthase (560 aa).

The Mg(2+) site is built by D308, D312, and E462. The short motif at 308–312 (DDIYD) is the DDXXD motif element.

This sequence belongs to the terpene synthase family. Tpsa subfamily. The cofactor is Mg(2+). Expressed in the rind tissues of ripe fruits.

It is found in the cytoplasm. It catalyses the reaction (2E,6E)-farnesyl diphosphate = (3E,6E)-alpha-farnesene + diphosphate. It participates in secondary metabolite biosynthesis; terpenoid biosynthesis. In terms of biological role, sesquiterpene synthase producing exclusively alpha-farnesene. Associated with the production of sesquiterpenes responsible for the aroma of the fruit. The sequence is that of Alpha-farnesene synthase from Cucumis melo (Muskmelon).